A 675-amino-acid chain; its full sequence is MAFSVEMPELGESVTEGTITQWLKSVGDTVEVDEPLLEVSTDKVDTEIPSPVAGVILEIKAEEDDTVDVGGVIAIIGDADETPANEAPADEAPAPAEEEEPVKEEPKKEAAPEAPAATGAATDVEMPELGESVTEGTITQWLKAVGDTVEVDEPLLEVSTDKVDTEIPSPVAGTIVEILADEDDTVDVGAVIARIGDANAAAAPAEEEAAPAEEEEPVKEEPKKEAAPEAPAATGAATDVEMPELGESVTEGTITQWLKAVGDTVEVDEPLLEVSTDKVDTEIPSPVAGTIVEILADEDDTVDVGAVIARIGDANAAAAPAEEEAAPAEEEEPVKEEPKKEEPKKEEPKKEAATTPAAASATVSASGDNVPYVTPLVRKLAEKHGVDLNTVTGTGIGGRIRKQDVLAAANGEAAPAEAAAPVSAWSTKSVDPEKAKLRGTTQKVNRIREITAMKTVEALQISAQLTQLHEVDMTRVAELRKKNKPAFIEKHGVNLTYLPFFVKAVVEALVSHPNVNASFNAKTKEMTYHSSVNLSIAVDTPAGLLTPVIHDAQDLSIPEIAKAIVDLADRSRNNKLKPNDLSGGTFTITNIGSEGALSDTPILVPPQAGILGTGAIVKRPVVITEDGIDSIAIRQMVFLPLTYDHQVVDGADAGRFLTTIKDRLETANFEGDLQL.

A Lipoyl-binding 1 domain is found at 2-77 (AFSVEMPELG…DVGGVIAIIG (76 aa)). Lysine 43 bears the N6-lipoyllysine mark. The tract at residues 77 to 124 (GDADETPANEAPADEAPAPAEEEEPVKEEPKKEAAPEAPAATGAATDV) is disordered. Low complexity-rich tracts occupy residues 84 to 95 (ANEAPADEAPAP) and 112 to 124 (PEAP…ATDV). One can recognise a Lipoyl-binding 2 domain in the interval 121 to 196 (ATDVEMPELG…DVGAVIARIG (76 aa)). Lysine 162 is subject to N6-lipoyllysine. A disordered region spans residues 200–240 (AAAAPAEEEAAPAEEEEPVKEEPKKEAAPEAPAATGAATDV). Positions 205 to 218 (AEEEAAPAEEEEPV) are enriched in acidic residues. The Lipoyl-binding 3 domain maps to 237–312 (ATDVEMPELG…DVGAVIARIG (76 aa)). Residue lysine 278 is modified to N6-lipoyllysine. Positions 316-368 (AAAAPAEEEAAPAEEEEPVKEEPKKEEPKKEEPKKEAATTPAAASATVSASGD) are disordered. Positions 321–334 (AEEEAAPAEEEEPV) are enriched in acidic residues. Positions 335-352 (KEEPKKEEPKKEEPKKEA) are enriched in basic and acidic residues. Residues 353 to 366 (ATTPAAASATVSAS) are compositionally biased toward low complexity. The region spanning 372–409 (YVTPLVRKLAEKHGVDLNTVTGTGIGGRIRKQDVLAAA) is the Peripheral subunit-binding (PSBD) domain. Catalysis depends on residues histidine 645 and aspartate 649.

This sequence belongs to the 2-oxoacid dehydrogenase family. In terms of assembly, forms a 24-polypeptide structural core with octahedral symmetry. Part of an unusual ODH/PDH supercomplex, consisting of AceE (E1), AceF (E2), and Lpd (E3) together with OdhA (E1+E2). Requires (R)-lipoate as cofactor.

The catalysed reaction is N(6)-[(R)-dihydrolipoyl]-L-lysyl-[protein] + acetyl-CoA = N(6)-[(R)-S(8)-acetyldihydrolipoyl]-L-lysyl-[protein] + CoA. Functionally, is essential for both 2-oxoglutarate dehydrogenase (ODH) and pyruvate dehydrogenase (PDH) activities, but AceF has exclusively transacetylase (and no transsuccinylase) activity. The lipoyl residues required for ODH activity are likely provided by AceF. The protein is Dihydrolipoyllysine-residue acetyltransferase component of pyruvate dehydrogenase complex (aceF) of Corynebacterium glutamicum (strain ATCC 13032 / DSM 20300 / JCM 1318 / BCRC 11384 / CCUG 27702 / LMG 3730 / NBRC 12168 / NCIMB 10025 / NRRL B-2784 / 534).